The primary structure comprises 408 residues: Dual-specificity RNA methyltransferase RlmN (408 aa).

The active-site Proton acceptor is glutamate 120. The Radical SAM core domain maps to 126-375; sequence EEGRGTLCIS…IRTPRGRDIL (250 aa). A disulfide bridge links cysteine 133 with cysteine 378. Residues cysteine 140, cysteine 144, and cysteine 147 each contribute to the [4Fe-4S] cluster site. S-adenosyl-L-methionine is bound by residues 204 to 205, serine 236, 258 to 260, and asparagine 335; these read GE and SLH. Residue cysteine 378 is the S-methylcysteine intermediate of the active site.

It belongs to the radical SAM superfamily. RlmN family. Requires [4Fe-4S] cluster as cofactor.

It localises to the cytoplasm. It catalyses the reaction adenosine(2503) in 23S rRNA + 2 reduced [2Fe-2S]-[ferredoxin] + 2 S-adenosyl-L-methionine = 2-methyladenosine(2503) in 23S rRNA + 5'-deoxyadenosine + L-methionine + 2 oxidized [2Fe-2S]-[ferredoxin] + S-adenosyl-L-homocysteine. The enzyme catalyses adenosine(37) in tRNA + 2 reduced [2Fe-2S]-[ferredoxin] + 2 S-adenosyl-L-methionine = 2-methyladenosine(37) in tRNA + 5'-deoxyadenosine + L-methionine + 2 oxidized [2Fe-2S]-[ferredoxin] + S-adenosyl-L-homocysteine. Functionally, specifically methylates position 2 of adenine 2503 in 23S rRNA and position 2 of adenine 37 in tRNAs. m2A2503 modification seems to play a crucial role in the proofreading step occurring at the peptidyl transferase center and thus would serve to optimize ribosomal fidelity. The chain is Dual-specificity RNA methyltransferase RlmN from Rhizobium leguminosarum bv. trifolii (strain WSM2304).